We begin with the raw amino-acid sequence, 438 residues long: Trigger factor (438 aa).

Positions 163–248 constitute a PPIase FKBP-type domain; it reads GDTAIIDFAG…VKEIKRKEIA (86 aa).

The protein belongs to the FKBP-type PPIase family. Tig subfamily.

The protein localises to the cytoplasm. It catalyses the reaction [protein]-peptidylproline (omega=180) = [protein]-peptidylproline (omega=0). Involved in protein export. Acts as a chaperone by maintaining the newly synthesized protein in an open conformation. Functions as a peptidyl-prolyl cis-trans isomerase. In Pelotomaculum thermopropionicum (strain DSM 13744 / JCM 10971 / SI), this protein is Trigger factor.